The chain runs to 376 residues: Chaperone protein DnaJ (376 aa).

The J domain maps to 4–69; the sequence is DFYETLGVQK…QKRAAYDRFG (66 aa). A CR-type zinc finger spans residues 133–211; the sequence is GKTAQIRVPA…CAGQGRVTEE (79 aa). The Zn(2+) site is built by Cys-146, Cys-149, Cys-163, Cys-166, Cys-185, Cys-188, Cys-199, and Cys-202. CXXCXGXG motif repeat units lie at residues 146–153, 163–170, 185–192, and 199–206; these read CTECSGSG, CSMCHGHG, CPQCQGRG, and CPKCAGQG.

It belongs to the DnaJ family. As to quaternary structure, homodimer. Zn(2+) is required as a cofactor.

The protein localises to the cytoplasm. In terms of biological role, participates actively in the response to hyperosmotic and heat shock by preventing the aggregation of stress-denatured proteins and by disaggregating proteins, also in an autonomous, DnaK-independent fashion. Unfolded proteins bind initially to DnaJ; upon interaction with the DnaJ-bound protein, DnaK hydrolyzes its bound ATP, resulting in the formation of a stable complex. GrpE releases ADP from DnaK; ATP binding to DnaK triggers the release of the substrate protein, thus completing the reaction cycle. Several rounds of ATP-dependent interactions between DnaJ, DnaK and GrpE are required for fully efficient folding. Also involved, together with DnaK and GrpE, in the DNA replication of plasmids through activation of initiation proteins. The polypeptide is Chaperone protein DnaJ (Mesorhizobium japonicum (strain LMG 29417 / CECT 9101 / MAFF 303099) (Mesorhizobium loti (strain MAFF 303099))).